Consider the following 388-residue polypeptide: Splicing factor 3B subunit 4 (388 aa).

RRM domains follow at residues 13–91 (ATIY…KASA) and 100–179 (ANIF…YAFK). Residues 244–388 (QPPPLMGMAQ…GMIPPPPPPS (145 aa)) form a disordered region. 3 stretches are compositionally biased toward pro residues: residues 261-325 (PPVP…PSRF), 333-355 (MPPP…PPRY), and 362-388 (MYPP…PPPS).

It belongs to the SF3B4 family.

The protein resides in the nucleus. Functionally, subunit of the splicing factor SF3B required for 'A' complex assembly formed by the stable binding of U2 snRNP to the branchpoint sequence (BPS) in pre-mRNA. Sequence independent binding of SF3A/SF3B complex upstream of the branch site is essential, it may anchor U2 snRNP to the pre-mRNA. May also be involved in the assembly of the 'E' complex. SF3B4 has been found in complex 'B' and 'C' as well. Belongs also to the minor U12-dependent spliceosome, which is involved in the splicing of rare class of nuclear pre-mRNA intron. This is Splicing factor 3B subunit 4 (sap-49) from Caenorhabditis elegans.